We begin with the raw amino-acid sequence, 600 residues long: Na(+)/dicarboxylate cotransporter 3 (600 aa).

Topologically, residues methionine 1–arginine 16 are cytoplasmic. A helical transmembrane segment spans residues leucine 17 to lysine 37. The Extracellular segment spans residues glutamate 38–glutamate 55. A helical transmembrane segment spans residues alanine 56–leucine 76. The Cytoplasmic segment spans residues proline 77–cysteine 82. A helical membrane pass occupies residues proline 83–isoleucine 103. Topologically, residues glutamate 104–phenylalanine 137 are extracellular. Residues leucine 138 to isoleucine 158 form a helical membrane-spanning segment. At leucine 159 to tryptophan 229 the chain is on the cytoplasmic side. The helical transmembrane segment at lysine 230 to glycine 250 threads the bilayer. Residues threonine 251 to isoleucine 278 are Extracellular-facing. Residues phenylalanine 279–tyrosine 299 traverse the membrane as a helical segment. The Cytoplasmic segment spans residues glycine 300–isoleucine 336. Residues lysine 337 to arginine 357 traverse the membrane as a helical segment. Topologically, residues aspartate 358–glycine 372 are extracellular. The helical transmembrane segment at phenylalanine 373–glutamine 393 threads the bilayer. The Cytoplasmic portion of the chain corresponds to lysine 394 to threonine 422. The helical intramembrane region spans valine 423–glutamate 443. Residues serine 444–proline 461 are Cytoplasmic-facing. The chain crosses the membrane as a helical span at residues proline 462 to asparagine 482. The Extracellular portion of the chain corresponds to threonine 483 to leucine 505. Residues tyrosine 506–proline 526 traverse the membrane as a helical segment. Over proline 527–glycine 546 the chain is Cytoplasmic. A helical membrane pass occupies residues leucine 547–threonine 567. At isoleucine 568–phenylalanine 600 the chain is on the extracellular side. N-linked (GlcNAc...) asparagine glycans are attached at residues asparagine 584 and asparagine 594.

This sequence belongs to the SLC13A/DASS transporter (TC 2.A.47) family. NADC subfamily. As to expression, highly expressed in kidney, and at much lower levels in brain.

It is found in the cell membrane. The catalysed reaction is succinate(out) + 3 Na(+)(out) = succinate(in) + 3 Na(+)(in). It carries out the reaction 2-oxoglutarate(out) + 3 Na(+)(out) = 2-oxoglutarate(in) + 3 Na(+)(in). The enzyme catalyses N-acetyl-L-aspartate(out) + 3 Na(+)(out) = N-acetyl-L-aspartate(in) + 3 Na(+)(in). It catalyses the reaction fumarate(out) + 3 Na(+)(out) = fumarate(in) + 3 Na(+)(in). The catalysed reaction is glutarate(out) + 3 Na(+)(out) = glutarate(in) + 3 Na(+)(in). It carries out the reaction 2,2-dimethylsuccinate(out) + 3 Na(+)(out) = 2,2-dimethylsuccinate(in) + 3 Na(+)(in). The enzyme catalyses 2,3-dimethylsuccinate(out) + 3 Na(+)(out) = 2,3-dimethylsuccinate(in) + 3 Na(+)(in). It catalyses the reaction malate(out) + 3 Na(+)(out) = malate(in) + 3 Na(+)(in). The catalysed reaction is itaconate(out) + 3 Na(+)(out) = itaconate(in) + 3 Na(+)(in). In terms of biological role, high-affinity sodium-dicarboxylate cotransporter that accepts a range of substrates with 4-6 carbon atoms, such as the citric acid cycle intermediates succinate and alpha-ketoglutarate (2-oxoglutarate), as well as other compounds including N-acetyl-L-aspartate. Transports the dicarboxylate into the cell with a probable stoichiometry of 3 Na(+) for 1 divalent dicarboxylate, rendering the process electrogenic. Can transport citrate in a Na(+)-dependent manner, recognizing the divalent form of citrate rather than the trivalent form which is normally found in blood. Imports itaconate in hepatocytes leading to activation of TFEB-dependent lysosomal biogenesis involved in antibacterial innate immune response. The chain is Na(+)/dicarboxylate cotransporter 3 (Slc13a3) from Mus musculus (Mouse).